A 383-amino-acid polypeptide reads, in one-letter code: 1-deoxy-D-xylulose 5-phosphate reductoisomerase (383 aa).

The NADPH site is built by Thr-10, Gly-11, Ser-12, Ile-13, and Asn-123. Lys-124 contacts 1-deoxy-D-xylulose 5-phosphate. Position 125 (Glu-125) interacts with NADPH. Asp-149 contacts Mn(2+). The 1-deoxy-D-xylulose 5-phosphate site is built by Ser-150, Glu-151, Ser-175, and His-198. Glu-151 is a Mn(2+) binding site. Position 204 (Gly-204) interacts with NADPH. 1-deoxy-D-xylulose 5-phosphate-binding residues include Ser-211, Asn-216, Lys-217, and Glu-220. Glu-220 serves as a coordination point for Mn(2+).

The protein belongs to the DXR family. Mg(2+) serves as cofactor. Mn(2+) is required as a cofactor.

It catalyses the reaction 2-C-methyl-D-erythritol 4-phosphate + NADP(+) = 1-deoxy-D-xylulose 5-phosphate + NADPH + H(+). It participates in isoprenoid biosynthesis; isopentenyl diphosphate biosynthesis via DXP pathway; isopentenyl diphosphate from 1-deoxy-D-xylulose 5-phosphate: step 1/6. Its function is as follows. Catalyzes the NADPH-dependent rearrangement and reduction of 1-deoxy-D-xylulose-5-phosphate (DXP) to 2-C-methyl-D-erythritol 4-phosphate (MEP). The polypeptide is 1-deoxy-D-xylulose 5-phosphate reductoisomerase (Desulfosudis oleivorans (strain DSM 6200 / JCM 39069 / Hxd3) (Desulfococcus oleovorans)).